The sequence spans 188 residues: Pyridoxal 5'-phosphate synthase subunit PdxT (188 aa).

Residue 46–48 (GES) participates in L-glutamine binding. The active-site Nucleophile is the Cys78. Residues Arg106 and 132-133 (IR) contribute to the L-glutamine site. Catalysis depends on charge relay system residues His169 and Glu171.

The protein belongs to the glutaminase PdxT/SNO family. As to quaternary structure, in the presence of PdxS, forms a dodecamer of heterodimers. Only shows activity in the heterodimer.

It catalyses the reaction aldehydo-D-ribose 5-phosphate + D-glyceraldehyde 3-phosphate + L-glutamine = pyridoxal 5'-phosphate + L-glutamate + phosphate + 3 H2O + H(+). The catalysed reaction is L-glutamine + H2O = L-glutamate + NH4(+). The protein operates within cofactor biosynthesis; pyridoxal 5'-phosphate biosynthesis. Its function is as follows. Catalyzes the hydrolysis of glutamine to glutamate and ammonia as part of the biosynthesis of pyridoxal 5'-phosphate. The resulting ammonia molecule is channeled to the active site of PdxS. The polypeptide is Pyridoxal 5'-phosphate synthase subunit PdxT (Tropheryma whipplei (strain TW08/27) (Whipple's bacillus)).